A 206-amino-acid chain; its full sequence is Acidic proline-rich protein PRP33 (206 aa).

Residues 1-13 (MLVVLLTAALLVL) form the signal peptide. The disordered stretch occupies residues 15–206 (SAHGSDEEVI…EQPSYLWFSS (192 aa)). Acidic residues predominate over residues 55-71 (ENGDGDDSDDGDDDGSG). 6 repeat units span residues 80–97 (PPPHGGNHQRPPPGHHHG), 98–115 (PPPSGGPQTSSQPGNPQG), 116–133 (PPPQGGPQGPPQPGNPQG), 134–152 (PPPQGGPQQRPPQPGKPQG), 153–170 (PPPQGGPQGPPQPGNPQG), and 171–189 (PPPQGGHQQRPPQPRKPQD). The interval 80–189 (PPPHGGNHQR…RPPQPRKPQD (110 aa)) is 6 X 18 AA approximate tandem repeats. Residues 103 to 112 (GPQTSSQPGN) are compositionally biased toward low complexity. Positions 113–174 (PQGPPPQGGP…PGNPQGPPPQ (62 aa)) are enriched in pro residues.

The protein resides in the secreted. Functionally, may protect teeth by binding to tannins. The polypeptide is Acidic proline-rich protein PRP33 (Prpg1) (Rattus norvegicus (Rat)).